Reading from the N-terminus, the 164-residue chain is MRLTSKGRYAVTAMLDVALNSEAGPVPLADISERQGISLSYLEQLFSRLRKNGLVSSVRGPGGGYLLGKDAGSIAVGEVISAVDESVDATRCQGKGGCQGGDKCLTHALWRDLSDRLTGFLNNITLGELVNNQEVLDVSGRQHTHDAPRASGRAQDAIDVKLRA.

Residues 2–131 (RLTSKGRYAV…NNITLGELVN (130 aa)) enclose the HTH rrf2-type domain. A DNA-binding region (H-T-H motif) is located at residues 28 to 51 (LADISERQGISLSYLEQLFSRLRK). Positions 92, 98, and 104 each coordinate [2Fe-2S] cluster.

[2Fe-2S] cluster serves as cofactor.

Its function is as follows. Regulates the transcription of several operons and genes involved in the biogenesis of Fe-S clusters and Fe-S-containing proteins. The polypeptide is HTH-type transcriptional regulator IscR (Salmonella choleraesuis (strain SC-B67)).